The primary structure comprises 329 residues: (12E)-labda-8(17),12,14-triene synthase (329 aa).

Residues Asp-90 and Glu-95 each contribute to the Mg(2+) site. Positions 90–95 (DDMHGE) match the DDXXXE motif motif. Residue Arg-184 participates in substrate binding. Asn-230 and Ser-234 together coordinate Mg(2+). An NXXXSXXXE motif motif is present at residues 230-238 (NDLASYERE). Arg-237 is a binding site for substrate. A Mg(2+)-binding site is contributed by Glu-238. 316–317 (RY) is a binding site for substrate.

This sequence belongs to the terpene synthase family. Mg(2+) is required as a cofactor.

It carries out the reaction (+)-copalyl diphosphate = (12E)-labda-8(17),12,14-triene + diphosphate. Involved in the biosynthesis of the mercapturic acid derivative diterpene cyslabdan A, a potentiator of the beta-lactam antibiotic imipenem. Catalyzes the conversion of (+)-copalyl diphosphate to yield labda-8(17),12(E),14-triene (biformene). This chain is (12E)-labda-8(17),12,14-triene synthase, found in Streptomyces cyslabdanicus.